The chain runs to 192 residues: dTTP/UTP pyrophosphatase (192 aa).

The active-site Proton acceptor is D70.

Belongs to the Maf family. YhdE subfamily. Requires a divalent metal cation as cofactor.

It localises to the cytoplasm. It carries out the reaction dTTP + H2O = dTMP + diphosphate + H(+). The catalysed reaction is UTP + H2O = UMP + diphosphate + H(+). Functionally, nucleoside triphosphate pyrophosphatase that hydrolyzes dTTP and UTP. May have a dual role in cell division arrest and in preventing the incorporation of modified nucleotides into cellular nucleic acids. The polypeptide is dTTP/UTP pyrophosphatase (Alkaliphilus oremlandii (strain OhILAs) (Clostridium oremlandii (strain OhILAs))).